We begin with the raw amino-acid sequence, 516 residues long: Putative thymidine phosphorylase (516 aa).

Belongs to the thymidine/pyrimidine-nucleoside phosphorylase family. Type 2 subfamily.

The enzyme catalyses thymidine + phosphate = 2-deoxy-alpha-D-ribose 1-phosphate + thymine. The polypeptide is Putative thymidine phosphorylase (Methylococcus capsulatus (strain ATCC 33009 / NCIMB 11132 / Bath)).